Reading from the N-terminus, the 727-residue chain is Pentatricopeptide repeat-containing protein At4g20740 (727 aa).

The tract at residues 1–84 (MKSPKPPNLS…PSPPSHSTVI (84 aa)) is disordered. The segment covering 38–56 (SNRQSIPRVSPQPQSNSLA) has biased composition (polar residues). Basic and acidic residues predominate over residues 59–70 (TPFDLRKWDPET). PPR repeat units lie at residues 157–191 (DFAAYNAFAYCLNRNGHFRAADQLPELMDSQGRPP), 192–226 (SEKQFEILIRMHADNRRGLRVYYVYEKMKKFGFKP), 227–261 (RVFLYNRIMDALVKNGYFDLALAVYEDFKEDGLVE), 262–296 (ESTTFMILVKGLCKAGRIEEMLEILQRMRENLCKP), 297–331 (DVFAYTAMIKTLVSEGNLDASLRVWDEMRRDEIKP), 332–366 (DVMAYGTLVVGLCKDGRVERGYELFMEMKGKQILI), 367–401 (DREIYRVLIEGFVADGKVRSACNLWEDLVDSGYIA), 402–436 (DIGIYNAVIKGLCSVNQVDKAYKLFQVAIEEELEP), 437–471 (DFETLSPIMVAYVVMNRLSDFSNVLERIGELGYPV), 506–540 (SVSVYNILMEALYKMGDIQKSLSLFYEMRKLGFEP), 541–575 (DSSSYSIAICCFVEKGDVKAACSFHEKIIEMSCVP), 576–606 (SIAAYLSLTKGLCQIGEIDAVMLLVRECLGN), 612–646 (MEFKYALTVCHVCKGSNAEKVMKVVDEMNQEGVFI), and 647–681 (NEVIYCAIISGMSKHGTIKVAREVFTELKKRKVMT).

The protein belongs to the PPR family. P subfamily.

The polypeptide is Pentatricopeptide repeat-containing protein At4g20740 (Arabidopsis thaliana (Mouse-ear cress)).